Here is a 355-residue protein sequence, read N- to C-terminus: Uroporphyrinogen decarboxylase (355 aa).

Substrate is bound by residues 27 to 31 (RQAGR), Asp78, Tyr155, Ser210, and His328.

Belongs to the uroporphyrinogen decarboxylase family. As to quaternary structure, homodimer.

It is found in the cytoplasm. It carries out the reaction uroporphyrinogen III + 4 H(+) = coproporphyrinogen III + 4 CO2. It participates in porphyrin-containing compound metabolism; protoporphyrin-IX biosynthesis; coproporphyrinogen-III from 5-aminolevulinate: step 4/4. Functionally, catalyzes the decarboxylation of four acetate groups of uroporphyrinogen-III to yield coproporphyrinogen-III. The polypeptide is Uroporphyrinogen decarboxylase (Ectopseudomonas mendocina (strain ymp) (Pseudomonas mendocina)).